We begin with the raw amino-acid sequence, 186 residues long: dITP/XTP pyrophosphatase (186 aa).

Substrate is bound at residue 7-12 (TSNPGK). Mg(2+) is bound by residues glutamate 36 and aspartate 65. The active-site Proton acceptor is aspartate 65. Substrate-binding positions include serine 66, 140–143 (FGYD), lysine 163, and 168–169 (HR).

This sequence belongs to the HAM1 NTPase family. In terms of assembly, homodimer. Requires Mg(2+) as cofactor. It depends on Mn(2+) as a cofactor.

It carries out the reaction XTP + H2O = XMP + diphosphate + H(+). The catalysed reaction is dITP + H2O = dIMP + diphosphate + H(+). The enzyme catalyses ITP + H2O = IMP + diphosphate + H(+). Its function is as follows. Pyrophosphatase that catalyzes the hydrolysis of nucleoside triphosphates to their monophosphate derivatives, with a high preference for the non-canonical purine nucleotides XTP (xanthosine triphosphate), dITP (deoxyinosine triphosphate) and ITP. Seems to function as a house-cleaning enzyme that removes non-canonical purine nucleotides from the nucleotide pool, thus preventing their incorporation into DNA/RNA and avoiding chromosomal lesions. The protein is dITP/XTP pyrophosphatase of Pyrococcus horikoshii (strain ATCC 700860 / DSM 12428 / JCM 9974 / NBRC 100139 / OT-3).